The chain runs to 351 residues: Methionine import ATP-binding protein MetN (351 aa).

The ABC transporter domain occupies 4–249 (VQLDHVSVTF…PKAELTQKFV (246 aa)). 41 to 48 (GFSGAGKS) is an ATP binding site.

This sequence belongs to the ABC transporter superfamily. Methionine importer (TC 3.A.1.24) family. The complex is composed of two ATP-binding proteins (MetN), two transmembrane proteins (MetI) and a solute-binding protein (MetQ).

It is found in the cell membrane. It carries out the reaction L-methionine(out) + ATP + H2O = L-methionine(in) + ADP + phosphate + H(+). The enzyme catalyses D-methionine(out) + ATP + H2O = D-methionine(in) + ADP + phosphate + H(+). Its function is as follows. Part of the ABC transporter complex MetNIQ involved in methionine import. Responsible for energy coupling to the transport system. The protein is Methionine import ATP-binding protein MetN of Lactobacillus delbrueckii subsp. bulgaricus (strain ATCC BAA-365 / Lb-18).